Reading from the N-terminus, the 416-residue chain is Serine hydroxymethyltransferase (416 aa).

Residues L118 and 122 to 124 (GHL) contribute to the (6S)-5,6,7,8-tetrahydrofolate site. K226 is modified (N6-(pyridoxal phosphate)lysine). (6S)-5,6,7,8-tetrahydrofolate contacts are provided by residues E242 and 350–352 (SPF).

It belongs to the SHMT family. Homodimer. The cofactor is pyridoxal 5'-phosphate.

It localises to the cytoplasm. It catalyses the reaction (6R)-5,10-methylene-5,6,7,8-tetrahydrofolate + glycine + H2O = (6S)-5,6,7,8-tetrahydrofolate + L-serine. Its pathway is one-carbon metabolism; tetrahydrofolate interconversion. It participates in amino-acid biosynthesis; glycine biosynthesis; glycine from L-serine: step 1/1. Its function is as follows. Catalyzes the reversible interconversion of serine and glycine with tetrahydrofolate (THF) serving as the one-carbon carrier. This reaction serves as the major source of one-carbon groups required for the biosynthesis of purines, thymidylate, methionine, and other important biomolecules. Also exhibits THF-independent aldolase activity toward beta-hydroxyamino acids, producing glycine and aldehydes, via a retro-aldol mechanism. This chain is Serine hydroxymethyltransferase, found in Helicobacter pylori (strain G27).